The chain runs to 142 residues: Large ribosomal subunit protein bL17 (142 aa).

It belongs to the bacterial ribosomal protein bL17 family. As to quaternary structure, part of the 50S ribosomal subunit. Contacts protein L32.

This Chlamydia caviae (strain ATCC VR-813 / DSM 19441 / 03DC25 / GPIC) (Chlamydophila caviae) protein is Large ribosomal subunit protein bL17.